The chain runs to 31 residues: Spectrin beta chain, non-erythrocytic 1 (31 aa).

Spectrin repeat units follow at residues 1-10, 11-19, and 20-31; these read VLLLSQDYGK, YKEVAELTR, and TQILAASYELHK. A Phosphotyrosine modification is found at Tyr-27.

Belongs to the spectrin family. As to quaternary structure, interacts with ANK2. Interacts with CPNE4 (via VWFA domain). Like erythrocyte spectrin, the spectrin-like proteins are capable to form dimers which can further associate to tetramers. Associates with the gamma-tubulin complex in brain, but not in kidney, liver, sperm, or uterus. Interacts with CAMSAP1. Can form heterodimers with SPTAN1.

Its subcellular location is the cytoplasm. The protein resides in the cytoskeleton. The protein localises to the myofibril. It is found in the sarcomere. It localises to the m line. Its subcellular location is the cytosol. The protein resides in the cell membrane. Its function is as follows. Fodrin, which seems to be involved in secretion, interacts with calmodulin in a calcium-dependent manner and is thus candidate for the calcium-dependent movement of the cytoskeleton at the membrane. Plays a critical role in central nervous system development and function. This Capra hircus (Goat) protein is Spectrin beta chain, non-erythrocytic 1 (SPTBN1).